The primary structure comprises 197 residues: dITP/XTP pyrophosphatase (197 aa).

8–13 (TGNVGK) is a binding site for substrate. 2 residues coordinate Mg(2+): Glu-40 and Asp-69. The Proton acceptor role is filled by Asp-69. Substrate-binding positions include Ser-70, 154–157 (FGYD), Lys-177, and 182–183 (HR).

The protein belongs to the HAM1 NTPase family. As to quaternary structure, homodimer. Mg(2+) is required as a cofactor. Mn(2+) serves as cofactor. It depends on Ni(2+) as a cofactor.

The catalysed reaction is XTP + H2O = XMP + diphosphate + H(+). The enzyme catalyses dITP + H2O = dIMP + diphosphate + H(+). It carries out the reaction ITP + H2O = IMP + diphosphate + H(+). Pyrophosphatase that catalyzes the hydrolysis of nucleoside triphosphates to their monophosphate derivatives, with a high preference for the non-canonical purine nucleotides XTP (xanthosine triphosphate), dITP (deoxyinosine triphosphate) and ITP. Can also efficiently hydrolyze 2'-deoxy-N-6-hydroxylaminopurine triphosphate (dHAPTP). Seems to function as a house-cleaning enzyme that removes non-canonical purine nucleotides from the nucleotide pool, thus preventing their incorporation into DNA/RNA and avoiding chromosomal lesions. To a much lesser extent, is also able to hydrolyze GTP, dGTP and dUTP, but shows very low activity toward the canonical nucleotides dATP, dCTP and dTTP and toward 8-oxo-dGTP, purine deoxyribose triphosphate, 2-aminopurine deoxyribose triphosphate and 2,6-diaminopurine deoxyribose triphosphate. Functionally, genetic interactions among priB, dam, lexA, nagC, polA, rdgB, rdgB, rep and uup link the PriA-PriB replication restart pathway to DNA double-strand break repair. This chain is dITP/XTP pyrophosphatase, found in Escherichia coli (strain K12).